A 182-amino-acid polypeptide reads, in one-letter code: Shikimate kinase (182 aa).

14-19 is an ATP binding site; the sequence is GAGKTT. A Mg(2+)-binding site is contributed by Thr-18. Substrate is bound by residues Asp-36, Arg-60, and Gly-84. Arg-122 is a binding site for ATP. Arg-141 contributes to the substrate binding site.

It belongs to the shikimate kinase family. As to quaternary structure, monomer. The cofactor is Mg(2+).

Its subcellular location is the cytoplasm. It carries out the reaction shikimate + ATP = 3-phosphoshikimate + ADP + H(+). The protein operates within metabolic intermediate biosynthesis; chorismate biosynthesis; chorismate from D-erythrose 4-phosphate and phosphoenolpyruvate: step 5/7. Its function is as follows. Catalyzes the specific phosphorylation of the 3-hydroxyl group of shikimic acid using ATP as a cosubstrate. This is Shikimate kinase from Marinomonas sp. (strain MWYL1).